Reading from the N-terminus, the 150-residue chain is D-aminoacyl-tRNA deacylase (150 aa).

A Gly-cisPro motif, important for rejection of L-amino acids motif is present at residues 138-139 (GP).

This sequence belongs to the DTD family. As to quaternary structure, homodimer.

It localises to the cytoplasm. The enzyme catalyses glycyl-tRNA(Ala) + H2O = tRNA(Ala) + glycine + H(+). The catalysed reaction is a D-aminoacyl-tRNA + H2O = a tRNA + a D-alpha-amino acid + H(+). Its function is as follows. An aminoacyl-tRNA editing enzyme that deacylates mischarged D-aminoacyl-tRNAs. Also deacylates mischarged glycyl-tRNA(Ala), protecting cells against glycine mischarging by AlaRS. Acts via tRNA-based rather than protein-based catalysis; rejects L-amino acids rather than detecting D-amino acids in the active site. By recycling D-aminoacyl-tRNA to D-amino acids and free tRNA molecules, this enzyme counteracts the toxicity associated with the formation of D-aminoacyl-tRNA entities in vivo and helps enforce protein L-homochirality. The protein is D-aminoacyl-tRNA deacylase of Natranaerobius thermophilus (strain ATCC BAA-1301 / DSM 18059 / JW/NM-WN-LF).